The following is a 201-amino-acid chain: NAD(P)H dehydrogenase (quinone) (201 aa).

The 189-residue stretch at 4-192 (VLVLYYSSYG…TIARFQGQHI (189 aa)) folds into the Flavodoxin-like domain. FMN is bound by residues 10–15 (SSYGHV) and 80–82 (TRF). Residue Tyr-12 participates in NAD(+) binding. Trp-100 is a binding site for substrate. FMN-binding positions include 115–121 (STASQHG) and His-136.

The protein belongs to the WrbA family. Requires FMN as cofactor.

The enzyme catalyses a quinone + NADH + H(+) = a quinol + NAD(+). It catalyses the reaction a quinone + NADPH + H(+) = a quinol + NADP(+). The polypeptide is NAD(P)H dehydrogenase (quinone) (Chromohalobacter salexigens (strain ATCC BAA-138 / DSM 3043 / CIP 106854 / NCIMB 13768 / 1H11)).